Reading from the N-terminus, the 187-residue chain is uncharacterized protein (187 aa).

Over residues 139–168 (ESKDRKALKNAARKAEKNAHEESSYFRVDD) the composition is skewed to basic and acidic residues. Residues 139–172 (ESKDRKALKNAARKAEKNAHEESSYFRVDDPEPE) form a disordered region.

This is an uncharacterized protein from Caenorhabditis elegans.